A 580-amino-acid chain; its full sequence is Myb-like protein C (580 aa).

Disordered stretches follow at residues 1–58, 73–101, 121–203, and 354–380; these read MTMI…YGSN, QYSI…TLLS, NVYN…SSTN, and SDND…NPPN. Composition is skewed to low complexity over residues 20-47, 87-101, and 126-203; these read NNNN…NNNN, NSTM…TLLS, and PHQS…SSTN. Basic residues predominate over residues 361 to 371; the sequence is KKKRERIRKSV. 2 consecutive HTH myb-type domains span residues 368–430 and 431–482; these read RKSV…CPAI and RKGS…SREV. DNA-binding regions (H-T-H motif) lie at residues 402–426 and 454–478; these read WKKI…KRVL and WKNV…KSCM. The region spanning 484–546 is the Myb-like domain; that stretch reads WSSREDEILQ…ECKTRYFQLN (63 aa).

Its subcellular location is the nucleus. In terms of biological role, transcription activator required for the culmination, at the time of the fruiting body formation. Regulates genes involved in the cell differentiation within the fruiting body. The polypeptide is Myb-like protein C (mybC) (Dictyostelium discoideum (Social amoeba)).